Reading from the N-terminus, the 2871-residue chain is Fibrillin-1 (2871 aa).

The first 24 residues, 1–24, serve as a signal peptide directing secretion; that stretch reads MRRGRLLEIALGFTVLLASYTSHG. The propeptide occupies 25–44; the sequence is ADANLEAGNVKETRASRAKR. The fibrillin unique N-terminal (FUN) domain stretch occupies residues 45-81; sequence RGGGGHDALKGPNVCGSRYNAYCCPGWKTLPGGNQCI. Residues 45-450 form an N-terminal domain region; sequence RGGGGHDALK…PPRVLPVNVT (406 aa). 11 disulfides stabilise this stretch: Cys59-Cys68, Cys67-Cys80, Cys85-Cys94, Cys89-Cys100, Cys102-Cys111, Cys119-Cys129, Cys123-Cys134, Cys136-Cys145, Cys150-Cys160, Cys154-Cys166, and Cys168-Cys177. EGF-like domains are found at residues 81 to 112, 115 to 146, and 147 to 178; these read IVPI…PSCG, SIQH…THCG, and QPVC…PQCE. Residues 119–329 form an interaction with MFAP4 region; it reads CNIRCMNGGS…YTSPDGTRCI (211 aa). Residues 184-236 enclose the TB 1 domain; it reads GPCFTVISNQMCQGQLSGIVCTKTLCCATVGRAWGHPCEMCPAQPHPCRRGFI. The interval 195 to 221 is hybrid domain 1; the sequence is CQGQLSGIVCTKTLCCATVGRAWGHPC. Positions 246–287 constitute an EGF-like 4; calcium-binding domain; the sequence is DVDECQAIPGLCQGGNCINTVGSFECKCPAGHKLNEVSQKCE. 6 disulfide bridges follow: Cys250–Cys262, Cys257–Cys271, Cys273–Cys286, Cys292–Cys304, Cys299–Cys313, and Cys315–Cys328. Ser268 is a glycosylation site (O-linked (Glc) serine). Positions 288–329 constitute an EGF-like 5; calcium-binding domain; sequence DIDECSTIPGICEGGECTNTVSSYFCKCPPGFYTSPDGTRCI. A TB 2 domain is found at 334–389; that stretch reads GYCYTALTNGRCSNQLPQSITKMQCCCDAGRCWSPGVTVAPEMCPIRATEDFNKLC. An N-linked (GlcNAc...) asparagine glycan is attached at Asn448. The region spanning 449–489 is the EGF-like 6 domain; that stretch reads VTDYCQLVRYLCQNGRCIPTPGSYRCECNKGFQLDLRGECI. Disulfide bonds link Cys453/Cys465, Cys460/Cys474, Cys476/Cys488, Cys494/Cys504, Cys499/Cys513, Cys515/Cys528, Cys534/Cys546, Cys541/Cys555, Cys557/Cys570, Cys576/Cys587, Cys582/Cys596, Cys598/Cys611, Cys617/Cys628, Cys623/Cys637, and Cys639/Cys652. Ser471 carries an O-linked (Glc) serine glycan. The region spanning 490 to 529 is the EGF-like 7; calcium-binding domain; the sequence is DVDECEKNPCAGGECINNQGSYTCQCRAGYQSTLTRTECR. A glycan (O-linked (Glc) serine) is linked at Ser510. Residues 530–571 enclose the EGF-like 8; calcium-binding domain; that stretch reads DIDECLQNGRICNNGRCINTDGSFHCVCNAGFHVTRDGKNCE. The O-linked (Glc) serine glycan is linked to Ser552. Residues 572–612 form the EGF-like 9; calcium-binding domain; that stretch reads DMDECSIRNMCLNGMCINEDGSFKCICKPGFQLASDGRYCK. O-linked (Glc) serine glycosylation occurs at Ser593. The EGF-like 10; calcium-binding domain maps to 613–653; that stretch reads DINECETPGICMNGRCVNTDGSYRCECFPGLAVGLDGRVCV. A glycan (O-linked (Glc) serine) is linked at Ser634. A TB 3 domain is found at 659 to 711; the sequence is STCYGGYKRGQCIKPLFGAVTKSECCCASTEYAFGEPCQPCPAQNSAEYQALC. The 42-residue stretch at 723 to 764 folds into the EGF-like 11; calcium-binding domain; it reads DINECALDPDICPNGICENLRGTYKCICNSGYEVDSTGKNCV. 16 disulfide bridges follow: Cys727–Cys739, Cys734–Cys748, Cys750–Cys763, Cys769–Cys781, Cys776–Cys790, Cys792–Cys805, Cys811–Cys821, Cys816–Cys830, Cys832–Cys845, Cys853–Cys875, Cys862–Cys887, Cys876–Cys890, Cys896–Cys908, Cys914–Cys926, Cys921–Cys935, and Cys937–Cys950. Residues 765–806 enclose the EGF-like 12; calcium-binding domain; that stretch reads DINECVLNSLLCDNGQCRNTPGSFVCTCPKGFIYKPDLKTCE. An O-linked (Glc) serine glycan is attached at Ser787. An EGF-like 13; calcium-binding domain is found at 807–846; it reads DIDECESSPCINGVCKNSPGSFICECSSESTLDPTKTICI. Residue Ser827 is glycosylated (O-linked (Glc) serine). Residues 851 to 902 form the TB 4 domain; sequence GTCWQTVIDGRCEININGATLKSQCCSSLGAAWGSPCTLCQVDPICGKGYSR. The tract at residues 862-887 is hybrid domain 2; the sequence is CEININGATLKSQCCSSLGAAWGSPC. The region spanning 910 to 951 is the EGF-like 14; calcium-binding domain; sequence DIDECEVFPGVCKNGLCVNTRGSFKCQCPSGMTLDATGRICL. The TB 5 domain maps to 956–1008; sequence ETCFLRYEDEECTLPIAGRHRMDACCCSVGAAWGTEECEECPMRNTPEYEELC. Residues 1028–1069 enclose the EGF-like 15; calcium-binding domain; it reads DINECKMIPSLCTHGKCRNTIGSFKCRCDSGFALDSEERNCT. Intrachain disulfides connect Cys1032–Cys1044, Cys1039–Cys1053, Cys1055–Cys1068, Cys1074–Cys1086, Cys1081–Cys1095, Cys1097–Cys1111, Cys1117–Cys1129, Cys1124–Cys1138, Cys1140–Cys1153, Cys1159–Cys1171, Cys1166–Cys1180, Cys1182–Cys1195, Cys1201–Cys1212, Cys1208–Cys1221, Cys1223–Cys1236, Cys1242–Cys1254, Cys1249–Cys1263, Cys1265–Cys1278, Cys1284–Cys1296, Cys1291–Cys1305, Cys1307–Cys1320, Cys1326–Cys1339, Cys1333–Cys1348, Cys1350–Cys1361, Cys1367–Cys1380, Cys1374–Cys1389, Cys1391–Cys1402, Cys1408–Cys1420, Cys1415–Cys1429, Cys1431–Cys1444, Cys1450–Cys1461, Cys1456–Cys1470, Cys1472–Cys1485, Cys1491–Cys1502, Cys1497–Cys1511, Cys1513–Cys1526, Cys1534–Cys1562, Cys1549–Cys1574, Cys1563–Cys1577, Cys1564–Cys1589, Cys1610–Cys1622, Cys1617–Cys1631, Cys1633–Cys1646, Cys1652–Cys1663, Cys1658–Cys1672, and Cys1674–Cys1687. Ser1050 is a glycosylation site (O-linked (Glc) serine). N-linked (GlcNAc...) asparagine glycosylation is present at Asn1067. Residues 1070–1112 form the EGF-like 16; calcium-binding domain; sequence DIDECRISPDLCGRGQCVNTPGDFECKCDEGYESGFMMMKNCM. An EGF-like 17; calcium-binding domain is found at 1113 to 1154; it reads DIDECQRDPLLCRGGVCHNTEGSYRCECPPGHQLSPNISACI. O-linked (Glc) serine glycosylation occurs at Ser1135. N-linked (GlcNAc...) asparagine glycosylation occurs at Asn1149. Residues 1155–1196 form the EGF-like 18; calcium-binding domain; sequence DINECELSAHLCPNGRCVNLIGKYQCACNPGYHSTPDRLFCV. An EGF-like 19; calcium-binding domain is found at 1197-1237; the sequence is DIDECSIMNGGCETFCTNSEGSYECSCQPGFALMPDQRSCT. O-linked (Glc) serine glycosylation is present at Ser1218. The EGF-like 20; calcium-binding domain maps to 1238-1279; sequence DIDECEDNPNICDGGQCTNIPGEYRCLCYDGFMASEDMKTCV. The EGF-like 21; calcium-binding domain occupies 1280–1321; that stretch reads DVNECDLNPNICLSGTCENTKGSFICHCDMGYSGKKGKTGCT. Ser1302 is a glycosylation site (O-linked (Glc) serine). An EGF-like 22; calcium-binding domain is found at 1322-1362; it reads DINECEIGAHNCGKHAVCTNTAGSFKCSCSPGWIGDGIKCT. An O-linked (Glc) serine glycan is attached at Ser1345. Residues 1363-1403 enclose the EGF-like 23; calcium-binding domain; the sequence is DLDECSNGTHMCSQHADCKNTMGSYRCLCKEGYTGDGFTCT. The N-linked (GlcNAc...) asparagine glycan is linked to Asn1369. Ser1386 carries O-linked (Glc) serine glycosylation. In terms of domain architecture, EGF-like 24; calcium-binding spans 1404–1445; sequence DLDECSENLNLCGNGQCLNAPGGYRCECDMGFVPSADGKACE. Positions 1446–1486 constitute an EGF-like 25; calcium-binding domain; that stretch reads DIDECSLPNICVFGTCHNLPGLFRCECEIGYELDRSGGNCT. N-linked (GlcNAc...) asparagine glycosylation occurs at Asn1484. The EGF-like 26; calcium-binding domain occupies 1487–1527; that stretch reads DVNECLDPTTCISGNCVNTPGSYICDCPPDFELNPTRVGCV. Ser1508 carries O-linked (Glc) serine glycosylation. The segment at 1528–2731 is C-terminal domain; the sequence is DTRSGNCYLD…GYPKRGRKRR (1204 aa). Positions 1532 to 1589 constitute a TB 6 domain; the sequence is GNCYLDIRPRGDNGDTACSNEIGVGVSKASCCCSLGKAWGTPCEMCPAVNTSEYKILC. The Cell attachment site signature appears at 1541–1543; it reads RGD. An N-linked (GlcNAc...) asparagine glycan is attached at Asn1581. In terms of domain architecture, EGF-like 27; calcium-binding spans 1606-1647; it reads DIDECQELPGLCQGGKCINTFGSFQCRCPTGYYLNEDTRVCD. Ser1628 carries O-linked (Glc) serine glycosylation. Positions 1648–1688 constitute an EGF-like 28; calcium-binding domain; sequence DVNECETPGICGPGTCYNTVGNYTCICPPDYMQVNGGNNCM. The N-linked (GlcNAc...) asparagine glycan is linked to Asn1669. One can recognise a TB 7 domain in the interval 1693–1748; it reads SLCYRNYYADNQTCDGELLFNMTKKMCCCSYNIGRAWNKPCEQCPIPSTDEFATLC. Residues Asn1703 and Asn1713 are each glycosylated (N-linked (GlcNAc...) asparagine). One can recognise an EGF-like 29; calcium-binding domain in the interval 1766–1807; the sequence is DIDECREIPGVCENGVCINMVGSFRCECPVGFFYNDKLLVCE. 40 disulfide bridges follow: Cys1770-Cys1782, Cys1777-Cys1791, Cys1793-Cys1806, Cys1812-Cys1824, Cys1818-Cys1833, Cys1835-Cys1847, Cys1853-Cys1865, Cys1860-Cys1874, Cys1876-Cys1889, Cys1895-Cys1905, Cys1900-Cys1914, Cys1916-Cys1928, Cys1934-Cys1947, Cys1942-Cys1956, Cys1958-Cys1971, Cys1977-Cys1989, Cys1984-Cys1998, Cys2000-Cys2011, Cys2017-Cys2029, Cys2024-Cys2038, Cys2040-Cys2053, Cys2061-Cys2083, Cys2070-Cys2096, Cys2084-Cys2099, Cys2085-Cys2111, Cys2131-Cys2142, Cys2137-Cys2151, Cys2153-Cys2164, Cys2170-Cys2181, Cys2176-Cys2190, Cys2192-Cys2204, Cys2210-Cys2221, Cys2217-Cys2230, Cys2232-Cys2245, Cys2251-Cys2265, Cys2258-Cys2274, Cys2276-Cys2289, Cys2295-Cys2307, Cys2302-Cys2316, and Cys2318-Cys2331. The region spanning 1808-1848 is the EGF-like 30; calcium-binding domain; sequence DIDECQNGPVCQRNAECINTAGSYRCDCKPGYRFTSTGQCN. Ser1830 carries O-linked (Glc) serine glycosylation. The EGF-like 31; calcium-binding domain maps to 1849-1890; that stretch reads DRNECQEIPNICSHGQCIDTVGSFYCLCHTGFKTNDDQTMCL. Ser1871 carries an O-linked (Glc) serine glycan. The 39-residue stretch at 1891 to 1929 folds into the EGF-like 32; calcium-binding domain; that stretch reads DINECERDACGNGTCRNTIGSFNCRCNHGFILSHNNDCI. Residue Asn1902 is glycosylated (N-linked (GlcNAc...) asparagine). The O-linked (Glc) serine glycan is linked to Ser1911. The region spanning 1930 to 1972 is the EGF-like 33; calcium-binding domain; that stretch reads DVDECASGNGNLCRNGQCINTVGSFQCQCNEGYEVAPDGRTCV. O-linked (Glc) serine glycosylation is present at Ser1953. The region spanning 1973–2012 is the EGF-like 34; calcium-binding domain; it reads DINECLLEPRKCAPGTCQNLDGSYRCICPPGYSLQNEKCE. The 42-residue stretch at 2013–2054 folds into the EGF-like 35; calcium-binding domain; it reads DIDECVEEPEICALGTCSNTEGSFKCLCPEGFSLSSSGRRCQ. A glycan (O-linked (Glc) serine) is linked at Ser2035. Residues 2059–2111 enclose the TB 8 domain; the sequence is SYCYAKFEGGKCSSPKSRNHSKQECCCALKGEGWGDPCELCPTEPDEAFRQIC. Asn2077 carries an N-linked (GlcNAc...) asparagine glycan. The EGF-like 36; calcium-binding domain occupies 2127-2165; sequence DMDECKEPDVCKHGQCINTDGSYRCECPFGYILAGNECV. O-linked (Glc) serine glycosylation occurs at Ser2148. The EGF-like 37; calcium-binding domain occupies 2166–2205; that stretch reads DTDECSVGNPCGNGTCKNVIGGFECTCEEGFEPGPMMTCE. Asn2178 is a glycosylation site (N-linked (GlcNAc...) asparagine). The EGF-like 38; calcium-binding domain maps to 2206–2246; that stretch reads DINECAQNPLLCAFRCVNTYGSYECKCPVGYVLREDRRMCK. O-linked (Glc) serine glycosylation occurs at Ser2227. The EGF-like 39; calcium-binding domain occupies 2247–2290; it reads DEDECEEGKHDCTEKQMECKNLIGTYMCICGPGYQRRPDGEGCV. In terms of domain architecture, EGF-like 40; calcium-binding spans 2291-2332; that stretch reads DENECQTKPGICENGRCLNTRGSYTCECNDGFTASPNQDECL. A glycan (O-linked (Glc) serine) is linked at Ser2313. The 54-residue stretch at 2337–2390 folds into the TB 9 domain; sequence GYCFTEVLQNMCQIGSSNRNPVTKSECCCDGGRGWGPHCEICPFQGTVAFKKLC. The region spanning 2402–2443 is the EGF-like 41; calcium-binding domain; sequence DIDECKVIHDVCRNGECVNDRGSYHCICKTGYTPDITGTSCV. 21 cysteine pairs are disulfide-bonded: Cys2406-Cys2418, Cys2413-Cys2427, Cys2429-Cys2442, Cys2448-Cys2459, Cys2455-Cys2468, Cys2470-Cys2483, Cys2489-Cys2500, Cys2496-Cys2509, Cys2511-Cys2522, Cys2528-Cys2541, Cys2535-Cys2550, Cys2552-Cys2565, Cys2571-Cys2581, Cys2577-Cys2590, Cys2592-Cys2605, Cys2611-Cys2622, Cys2617-Cys2631, Cys2633-Cys2646, Cys2652-Cys2663, Cys2659-Cys2672, and Cys2674-Cys2686. Positions 2444–2484 constitute an EGF-like 42; calcium-binding domain; it reads DLNECNQAPKPCNFICKNTEGSYQCSCPKGYILQEDGRSCK. An O-linked (Glc) serine glycan is attached at Ser2465. The EGF-like 43; calcium-binding domain maps to 2485 to 2523; it reads DLDECATKQHNCQFLCVNTIGGFTCKCPPGFTQHHTSCI. Positions 2524-2566 constitute an EGF-like 44; calcium-binding domain; the sequence is DNNECTSDINLCGSKGICQNTPGSFTCECQRGFSLDQTGSSCE. O-linked (Glc) serine glycosylation is present at Ser2547. One can recognise an EGF-like 45; calcium-binding domain in the interval 2567–2606; that stretch reads DVDECEGNHRCQHGCQNIIGGYRCSCPQGYLQHYQWNQCV. Residues 2607-2647 enclose the EGF-like 46; calcium-binding domain; that stretch reads DENECLSAHICGGASCHNTLGSYKCMCPAGFQYEQFSGGCQ. The O-linked (Glc) serine glycan is linked to Ser2628. An EGF-like 47; calcium-binding domain is found at 2648-2687; it reads DINECGSAQAPCSYGCSNTEGGYLCGCPPGYFRIGQGHCV. Residue Ser2702 is modified to Phosphoserine; by FAM20C. Residue Ser2709 is modified to Phosphoserine. The interval 2726–2746 is disordered; it reads RGRKRRSTNETDASNIEDQSE. Asn2734 is a glycosylation site (N-linked (GlcNAc...) asparagine). The segment covering 2735–2746 has biased composition (polar residues); sequence ETDASNIEDQSE. N-linked (GlcNAc...) asparagine glycans are attached at residues Asn2750 and Asn2767.

Belongs to the fibrillin family. As to quaternary structure, interacts with COL16A1. Interacts with integrin alpha-V/beta-3. Interacts with ADAMTS10; this interaction promotes microfibril assembly. Interacts with THSD4; this interaction promotes fibril formation. Interacts (via N-terminal domain) with FBLN2 and FBLN5. Interacts with ELN. Forms a ternary complex with ELN and FBLN2 or FBLN5 and a significant interaction with ELN seen only in the presence of FBLN2 or FBLN5. Interacts (via N-terminal domain) with LTBP2 (via C-terminal domain) in a Ca(+2)-dependent manner. Interacts (via N-terminal domain) with LTBP1 (via C-terminal domain). Interacts with integrins ITGA5:ITGB1, ITGAV:ITGB3 and ITGAV:ITGB6. Interacts (via N-terminal domain) with BMP2, BMP4, BMP7, BMP10 and GDF5. Interacts (via N-terminal domain) with MFAP2 and MFAP5. Interacts with ADAMTSL5. Interacts with MFAP4. Interacts (via N-terminal domain) with TNFSF11 in a Ca(+2)-dependent manner. Interacts (via N-terminal domain) with EFEMP2; this interaction inhibits EFEMP2 binding to LOX and ELN. Cleavage of N- and C-terminus by furin is required for incorporation into the extracellular matrix and assembly into microfibrils. The C-terminus, which corresponds to the Asprosin chain, was initially thought to constitute a propeptide. Fibrillin-1 and Asprosin chains are still linked together during the secretion from cells, but are subsequently separated by furin, an essential step for incorporation of Fibrillin-1 into the nascent microfibrils. Post-translationally, forms intermolecular disulfide bonds either with other fibrillin-1 molecules or with other components of the microfibrils. In terms of processing, O-glycosylated on serine residues by POGLUT2 and POGLUT3 which is necessary for efficient protein secretion.

The protein localises to the secreted. It localises to the extracellular space. It is found in the extracellular matrix. Functionally, structural component of the 10-12 nm diameter microfibrils of the extracellular matrix, which conveys both structural and regulatory properties to load-bearing connective tissues. Fibrillin-1-containing microfibrils provide long-term force bearing structural support. In tissues such as the lung, blood vessels and skin, microfibrils form the periphery of the elastic fiber, acting as a scaffold for the deposition of elastin. In addition, microfibrils can occur as elastin-independent networks in tissues such as the ciliary zonule, tendon, cornea and glomerulus where they provide tensile strength and have anchoring roles. Fibrillin-1 also plays a key role in tissue homeostasis through specific interactions with growth factors, such as the bone morphogenetic proteins (BMPs), growth and differentiation factors (GDFs) and latent transforming growth factor-beta-binding proteins (LTBPs), cell-surface integrins and other extracellular matrix protein and proteoglycan components. Regulates osteoblast maturation by controlling TGF-beta bioavailability and calibrating TGF-beta and BMP levels, respectively. Negatively regulates osteoclastogenesis by binding and sequestering an osteoclast differentiation and activation factor TNFSF11. This leads to disruption of TNFSF11-induced Ca(2+) signaling and impairment of TNFSF11-mediated nuclear translocation and activation of transcription factor NFATC1 which regulates genes important for osteoclast differentiation and function. Mediates cell adhesion via its binding to cell surface receptors integrins ITGAV:ITGB3 and ITGA5:ITGB1. Binds heparin and this interaction has an important role in the assembly of microfibrils. Its function is as follows. Adipokine secreted by white adipose tissue that plays an important regulatory role in the glucose metabolism of liver, muscle and pancreas. Hormone that targets the liver in response to fasting to increase plasma glucose levels. Binds the olfactory receptor OR4M1 at the surface of hepatocytes and promotes hepatocyte glucose release by activating the protein kinase A activity in the liver, resulting in rapid glucose release into the circulation. May act as a regulator of adaptive thermogenesis by inhibiting browning and energy consumption, while increasing lipid deposition in white adipose tissue. Also acts as an orexigenic hormone that increases appetite: crosses the blood brain barrier and exerts effects on the hypothalamus. In the arcuate nucleus of the hypothalamus, asprosin directly activates orexigenic AgRP neurons and indirectly inhibits anorexigenic POMC neurons, resulting in appetite stimulation. Activates orexigenic AgRP neurons via binding to the olfactory receptor OR4M1. May also play a role in sperm motility in testis via interaction with OR4M1 receptor. The protein is Fibrillin-1 of Homo sapiens (Human).